Consider the following 376-residue polypeptide: Alcohol dehydrogenase class-3 (376 aa).

N-acetylserine is present on serine 1. The Zn(2+) site is built by cysteine 47, histidine 69, cysteine 99, cysteine 102, cysteine 105, cysteine 113, and cysteine 176.

It belongs to the zinc-containing alcohol dehydrogenase family. Class-III subfamily. Homodimer. Zn(2+) serves as cofactor. In terms of tissue distribution, liver and gut.

It is found in the cytoplasm. The catalysed reaction is a primary alcohol + NAD(+) = an aldehyde + NADH + H(+). The enzyme catalyses a secondary alcohol + NAD(+) = a ketone + NADH + H(+). It carries out the reaction S-(hydroxymethyl)glutathione + NADP(+) = S-formylglutathione + NADPH + H(+). It catalyses the reaction S-(hydroxymethyl)glutathione + NAD(+) = S-formylglutathione + NADH + H(+). The catalysed reaction is S-nitrosoglutathione + NADH + H(+) = S-(hydroxysulfenamide)glutathione + NAD(+). In terms of biological role, class-III ADH is remarkably ineffective in oxidizing ethanol, but it readily catalyzes the oxidation of long-chain primary alcohols and the oxidation of S-(hydroxymethyl) glutathione. Also acts as a S-nitroso-glutathione reductase by catalyzing the NADH-dependent reduction of S-nitrosoglutathione, thereby regulating protein S-nitrosylation. This chain is Alcohol dehydrogenase class-3, found in Myxine glutinosa (Atlantic hagfish).